A 448-amino-acid chain; its full sequence is Probable glycine dehydrogenase (decarboxylating) subunit 1 (448 aa).

Belongs to the GcvP family. N-terminal subunit subfamily. In terms of assembly, the glycine cleavage system is composed of four proteins: P, T, L and H. In this organism, the P 'protein' is a heterodimer of two subunits.

It carries out the reaction N(6)-[(R)-lipoyl]-L-lysyl-[glycine-cleavage complex H protein] + glycine + H(+) = N(6)-[(R)-S(8)-aminomethyldihydrolipoyl]-L-lysyl-[glycine-cleavage complex H protein] + CO2. Its function is as follows. The glycine cleavage system catalyzes the degradation of glycine. The P protein binds the alpha-amino group of glycine through its pyridoxal phosphate cofactor; CO(2) is released and the remaining methylamine moiety is then transferred to the lipoamide cofactor of the H protein. The sequence is that of Probable glycine dehydrogenase (decarboxylating) subunit 1 from Listeria monocytogenes serotype 4b (strain CLIP80459).